The primary structure comprises 314 residues: Ribonuclease Z (314 aa).

His-61, His-63, Asp-65, His-66, His-137, Asp-207, and His-263 together coordinate Zn(2+). The active-site Proton acceptor is Asp-65.

Belongs to the RNase Z family. Homodimer. Zn(2+) serves as cofactor.

It catalyses the reaction Endonucleolytic cleavage of RNA, removing extra 3' nucleotides from tRNA precursor, generating 3' termini of tRNAs. A 3'-hydroxy group is left at the tRNA terminus and a 5'-phosphoryl group is left at the trailer molecule.. Functionally, zinc phosphodiesterase, which displays some tRNA 3'-processing endonuclease activity. Probably involved in tRNA maturation, by removing a 3'-trailer from precursor tRNA. The polypeptide is Ribonuclease Z (Thermococcus gammatolerans (strain DSM 15229 / JCM 11827 / EJ3)).